Reading from the N-terminus, the 74-residue chain is UPF0346 protein RBAM_019500 (74 aa).

This sequence belongs to the UPF0346 family.

This chain is UPF0346 protein RBAM_019500, found in Bacillus velezensis (strain DSM 23117 / BGSC 10A6 / LMG 26770 / FZB42) (Bacillus amyloliquefaciens subsp. plantarum).